The sequence spans 214 residues: Phosphoenolpyruvate guanylyltransferase (214 aa).

The phosphoenolpyruvate site is built by T148, G163, and S166.

Belongs to the CofC family.

The enzyme catalyses phosphoenolpyruvate + GTP + H(+) = enolpyruvoyl-2-diphospho-5'-guanosine + diphosphate. Its pathway is cofactor biosynthesis; coenzyme F420 biosynthesis. Its function is as follows. Guanylyltransferase that catalyzes the activation of phosphoenolpyruvate (PEP) as enolpyruvoyl-2-diphospho-5'-guanosine, via the condensation of PEP with GTP. It is involved in the biosynthesis of coenzyme F420, a hydride carrier cofactor. In Mycolicibacterium gilvum (strain PYR-GCK) (Mycobacterium gilvum (strain PYR-GCK)), this protein is Phosphoenolpyruvate guanylyltransferase.